Reading from the N-terminus, the 69-residue chain is MVTVNVDKNEGLEKALKRFKRMIEKEAIIREWKRREYYEKPSTIRVKKEKAFKRKQAKKVRKLKQKIGK.

This sequence belongs to the bacterial ribosomal protein bS21 family.

This chain is Small ribosomal subunit protein bS21, found in Borrelia duttonii (strain Ly).